The following is a 52-amino-acid chain: Large ribosomal subunit protein eL39 (52 aa).

Belongs to the eukaryotic ribosomal protein eL39 family. Interacts with YIH1.

The protein is Large ribosomal subunit protein eL39 (RPL39) of Encephalitozoon cuniculi (strain GB-M1) (Microsporidian parasite).